Reading from the N-terminus, the 431-residue chain is Adenylosuccinate synthetase (431 aa).

Residues 13–19 (GDEGKGK) and 41–43 (GHT) contribute to the GTP site. Aspartate 14 (proton acceptor) is an active-site residue. 2 residues coordinate Mg(2+): aspartate 14 and glycine 41. IMP contacts are provided by residues 14-17 (DEGK), 39-42 (NAGH), threonine 130, arginine 144, glutamine 225, threonine 240, and arginine 304. Histidine 42 (proton donor) is an active-site residue. 300–306 (AVTGRPR) is a substrate binding site. GTP is bound by residues arginine 306, 332–334 (KLD), and 415–417 (STG).

The protein belongs to the adenylosuccinate synthetase family. In terms of assembly, homodimer. The cofactor is Mg(2+).

It is found in the cytoplasm. The enzyme catalyses IMP + L-aspartate + GTP = N(6)-(1,2-dicarboxyethyl)-AMP + GDP + phosphate + 2 H(+). It participates in purine metabolism; AMP biosynthesis via de novo pathway; AMP from IMP: step 1/2. In terms of biological role, plays an important role in the de novo pathway of purine nucleotide biosynthesis. Catalyzes the first committed step in the biosynthesis of AMP from IMP. The chain is Adenylosuccinate synthetase from Legionella pneumophila (strain Paris).